The primary structure comprises 407 residues: Arginine deiminase (407 aa).

Catalysis depends on Cys397, which acts as the Amidino-cysteine intermediate.

Belongs to the arginine deiminase family.

It localises to the cytoplasm. The catalysed reaction is L-arginine + H2O = L-citrulline + NH4(+). Its pathway is amino-acid degradation; L-arginine degradation via ADI pathway; carbamoyl phosphate from L-arginine: step 1/2. This is Arginine deiminase from Salmonella choleraesuis (strain SC-B67).